A 472-amino-acid chain; its full sequence is L-fuculokinase (472 aa).

This sequence belongs to the FGGY kinase family. It depends on a divalent metal cation as a cofactor.

It carries out the reaction L-fuculose + ATP = L-fuculose 1-phosphate + ADP + H(+). The protein operates within carbohydrate degradation; L-fucose degradation; L-lactaldehyde and glycerone phosphate from L-fucose: step 2/3. Catalyzes the phosphorylation of L-fuculose. Can also phosphorylate, with lower efficiency, D-ribulose, D-xylulose and D-fructose. The polypeptide is L-fuculokinase (Escherichia coli (strain K12)).